Here is a 216-residue protein sequence, read N- to C-terminus: Protein-L-isoaspartate O-methyltransferase (216 aa).

Residue Ser61 is part of the active site.

The protein belongs to the methyltransferase superfamily. L-isoaspartyl/D-aspartyl protein methyltransferase family.

The protein resides in the cytoplasm. It carries out the reaction [protein]-L-isoaspartate + S-adenosyl-L-methionine = [protein]-L-isoaspartate alpha-methyl ester + S-adenosyl-L-homocysteine. Its function is as follows. Catalyzes the methyl esterification of L-isoaspartyl residues in peptides and proteins that result from spontaneous decomposition of normal L-aspartyl and L-asparaginyl residues. It plays a role in the repair and/or degradation of damaged proteins. In Pyrococcus abyssi (strain GE5 / Orsay), this protein is Protein-L-isoaspartate O-methyltransferase (pcm).